Consider the following 280-residue polypeptide: MASTFRLSISFLTLILFSLWVVEAHTSRKLISIKEKEGQDISHLLKDGEFDDPSLYMYFTLNDLKLGTKLLIYFYKNDLQKLPPLLTRQQADLIPFTKSKLDFLLDHFSITKDSPQGKAIKETLGHCDAKAIEGEHKFCGTSLESLIDLVKKTMGYNVDLKVMTTKVMVPAQNSISYALHNYTFVEAPKELVGIKMLGCHRMPYPYAVYYCHGHKGGSRVFEVNLVTDDGRQRVVGPAVCHMDTSTWDADHVAFKVLKMEPRSAPVCHFFPLDNIVWVTK.

A signal peptide spans 1 to 24; the sequence is MASTFRLSISFLTLILFSLWVVEA. The BURP domain maps to 58–280; that stretch reads YFTLNDLKLG…PLDNIVWVTK (223 aa).

In terms of tissue distribution, expressed in cotyledons, radicle, floral buds, open flowers, roots and developing seeds, but not in leaves. Highly expressed in the root tips. Detected in young leaves, hypocotyls, stems and mature seed funiculum.

The protein localises to the protein storage vacuole. It is found in the golgi apparatus. Its subcellular location is the golgi stack. It localises to the trans-Golgi network. The protein resides in the prevacuolar compartment. Associated with the protein storage vacuole formation. The protein is BURP domain protein USPL1 of Arabidopsis thaliana (Mouse-ear cress).